Consider the following 212-residue polypeptide: Dephospho-CoA kinase (212 aa).

The 202-residue stretch at 3-204 (ILGLTGSIGM…GSRPAAPVGG (202 aa)) folds into the DPCK domain. 11–16 (GMGKST) contributes to the ATP binding site.

The protein belongs to the CoaE family.

It localises to the cytoplasm. It catalyses the reaction 3'-dephospho-CoA + ATP = ADP + CoA + H(+). It participates in cofactor biosynthesis; coenzyme A biosynthesis; CoA from (R)-pantothenate: step 5/5. Catalyzes the phosphorylation of the 3'-hydroxyl group of dephosphocoenzyme A to form coenzyme A. This chain is Dephospho-CoA kinase, found in Paramagnetospirillum magneticum (strain ATCC 700264 / AMB-1) (Magnetospirillum magneticum).